Reading from the N-terminus, the 534-residue chain is Invertase (534 aa).

A signal peptide spans 1–21 (MKITTLVASILMSVLLEPVIA). Substrate contacts are provided by residues 46–49 (WLND) and Gln-67. Asp-49 is a catalytic residue. Residue Asn-71 is glycosylated (N-linked (GlcNAc...) asparagine). 109–110 (FS) serves as a coordination point for substrate. Asn-118, Asn-119, and Asn-172 each carry an N-linked (GlcNAc...) asparagine glycan. 177-178 (RD) is a binding site for substrate. A glycan (N-linked (GlcNAc...) asparagine) is linked at Asn-218. Positions 229 and 313 each coordinate substrate. Asn-375, Asn-381, Asn-392, and Asn-420 each carry an N-linked (GlcNAc...) asparagine glycan.

The protein belongs to the glycosyl hydrolase 32 family.

The enzyme catalyses Hydrolysis of terminal non-reducing beta-D-fructofuranoside residues in beta-D-fructofuranosides.. This is Invertase (INV) from Debaryomyces hansenii (strain ATCC 36239 / CBS 767 / BCRC 21394 / JCM 1990 / NBRC 0083 / IGC 2968) (Yeast).